A 107-amino-acid chain; its full sequence is Period circadian protein (107 aa).

Residues 81–107 are disordered; the sequence is ITNGSNTGTGTSSGSFQPPLLTEALLN. Residues 82 to 95 show a composition bias toward low complexity; sequence TNGSNTGTGTSSGS.

As to quaternary structure, forms a heterodimer with timeless (TIM); the complex then translocates into the nucleus. In terms of processing, phosphorylated with a circadian rhythmicity, probably by the double-time protein (dbt). Phosphorylation could be implicated in the stability of per monomer and in the formation of heterodimer per-tim.

Its subcellular location is the nucleus. It localises to the cytoplasm. The protein resides in the perinuclear region. In terms of biological role, essential for biological clock functions. Determines the period length of circadian and ultradian rhythms; an increase in PER dosage leads to shortened circadian rhythms and a decrease leads to lengthened circadian rhythms. Essential for the circadian rhythmicity of locomotor activity, eclosion behavior, and for the rhythmic component of the male courtship song that originates in the thoracic nervous system. The biological cycle depends on the rhythmic formation and nuclear localization of the TIM-PER complex. Light induces the degradation of TIM, which promotes elimination of PER. Nuclear activity of the heterodimer coordinatively regulates PER and TIM transcription through a negative feedback loop. Behaves as a negative element in circadian transcriptional loop. Does not appear to bind DNA, suggesting indirect transcriptional inhibition. The chain is Period circadian protein (per) from Beris vallata (Common orange legionnaire).